The chain runs to 621 residues: Laccase-2 (621 aa).

The signal sequence occupies residues 1-23 (MMKSFFSAAALLLGLVAPSAVLA). Positions 24–48 (APSLPGVPREVTRDLLRPVEERQSS) are excised as a propeptide. Cysteine 49 and cysteine 57 are disulfide-bonded. Plastocyanin-like domains follow at residues 78-201 (TRTY…IVVN) and 210-367 (IDLG…LPTN). Asparagine 133 is a glycosylation site (N-linked (GlcNAc...) asparagine). Positions 138, 140, 183, and 185 each coordinate Cu cation. 2 disulfide bridges follow: cysteine 159-cysteine 586 and cysteine 343-cysteine 377. N-linked (GlcNAc...) asparagine glycans are attached at residues asparagine 261, asparagine 276, asparagine 289, asparagine 325, and asparagine 334. N-linked (GlcNAc...) asparagine glycans are attached at residues asparagine 401, asparagine 421, and asparagine 441. A Plastocyanin-like 3 domain is found at 430–566 (DKPIVDYVIA…GGLSVQYLER (137 aa)). The Cu cation site is built by histidine 476, histidine 479, histidine 481, histidine 548, cysteine 549, histidine 550, and histidine 554. Residues 606-621 (KVKKWVGEHPDWYIKN) constitute a propeptide that is removed on maturation.

This sequence belongs to the multicopper oxidase family. As to quaternary structure, monomer. Requires Cu cation as cofactor. In terms of processing, proteolytically processed at both its N-terminus and its C-terminus.

Its subcellular location is the secreted. It catalyses the reaction 4 hydroquinone + O2 = 4 benzosemiquinone + 2 H2O. Functionally, probably involved in lignin degradation and in the detoxification of lignin-derived products in its natural habitat (herbivorous dung), which is rich in lignin of grasses and straw. Probably involved in melanin synthesis and in perithecia development. The polypeptide is Laccase-2 (LAC2) (Podospora anserina (Pleurage anserina)).